Here is a 224-residue protein sequence, read N- to C-terminus: Octanoyltransferase (224 aa).

The region spanning P45–W223 is the BPL/LPL catalytic domain. Substrate is bound by residues R87–H94, S154–G156, and G167–A169. Residue C185 is the Acyl-thioester intermediate of the active site.

It belongs to the LipB family.

The protein resides in the cytoplasm. The enzyme catalyses octanoyl-[ACP] + L-lysyl-[protein] = N(6)-octanoyl-L-lysyl-[protein] + holo-[ACP] + H(+). It participates in protein modification; protein lipoylation via endogenous pathway; protein N(6)-(lipoyl)lysine from octanoyl-[acyl-carrier-protein]: step 1/2. Its function is as follows. Catalyzes the transfer of endogenously produced octanoic acid from octanoyl-acyl-carrier-protein onto the lipoyl domains of lipoate-dependent enzymes. Lipoyl-ACP can also act as a substrate although octanoyl-ACP is likely to be the physiological substrate. The sequence is that of Octanoyltransferase from Prochlorococcus marinus (strain SARG / CCMP1375 / SS120).